The sequence spans 200 residues: Probable molybdenum cofactor guanylyltransferase (200 aa).

Residues 9 to 11 (LAG), Lys21, Asp69, and Asp100 each bind GTP. A Mg(2+)-binding site is contributed by Asp100.

Belongs to the MobA family. Mg(2+) is required as a cofactor.

The protein resides in the cytoplasm. The enzyme catalyses Mo-molybdopterin + GTP + H(+) = Mo-molybdopterin guanine dinucleotide + diphosphate. Its function is as follows. Transfers a GMP moiety from GTP to Mo-molybdopterin (Mo-MPT) cofactor (Moco or molybdenum cofactor) to form Mo-molybdopterin guanine dinucleotide (Mo-MGD) cofactor. This chain is Probable molybdenum cofactor guanylyltransferase, found in Bacillus cereus (strain AH820).